The following is a 324-amino-acid chain: Transcription factor TCP24 (324 aa).

The region spanning 50–108 is the TCP domain; sequence GKDRHSKVLTSKGLRDRRIRLSVATAIQFYDLQDRLGFDQPSKAVEWLINAASDSITDL. 2 disordered regions span residues 122–215 and 261–297; these read QNQT…PMNH and QRSS…NHQL. The span at 127-142 shows a compositional bias: low complexity; it reads SACSSGTSESSLLSLS. Residues 144 to 162 form the R domain; that stretch reads TEIRGKARERARERTAKDR. Over residues 144–167 the composition is skewed to basic and acidic residues; it reads TEIRGKARERARERTAKDRDKDLQ. Composition is skewed to polar residues over residues 168-192 and 200-212; these read NAHS…NWTG and VQLQ…SQEP. Residues 261-281 are compositionally biased toward low complexity; the sequence is QRSSISSSSSSSSPMDSQSIS.

Forms a heterodimeric complex with ABAP1. Interacts with SPL. In terms of tissue distribution, expressed in cotyledons, particularly in the vascular region, in leaves, roots, stems, buds, flowers and siliques.

It is found in the nucleus. Plays a pivotal role in the control of morphogenesis of shoot organs by negatively regulating the expression of boundary-specific genes such as CUC genes, probably through the induction of miRNA (e.g. miR164). In association with ABAP1, exerts a negative role in cell proliferation in leaves, possibly by inhibiting mitotic DNA replication. Participates in ovule development. The sequence is that of Transcription factor TCP24 (TCP24) from Arabidopsis thaliana (Mouse-ear cress).